We begin with the raw amino-acid sequence, 573 residues long: 60 kDa heat shock protein, mitochondrial (573 aa).

The transit peptide at 1-26 (MLRLPTVLRQMRPVSRALAPHLTRAY) directs the protein to the mitochondrion. At K31 the chain carries N6-succinyllysine. 2 positions are modified to phosphoserine: S67 and S70. Residue K75 participates in ATP binding. K75 is subject to N6-acetyllysine. Residue K82 is modified to N6-acetyllysine; alternate. K82 is modified (N6-succinyllysine; alternate). Position 87 is an N6-acetyllysine (K87). Y90 is modified (phosphotyrosine). The residue at position 91 (K91) is an N6-acetyllysine. 111–115 (DGTTT) lines the ATP pocket. An N6-acetyllysine; alternate modification is found at K125. K125 is modified (N6-succinyllysine; alternate). The residue at position 130 (K130) is an N6-acetyllysine. At K133 the chain carries N6-acetyllysine; alternate. At K133 the chain carries N6-succinyllysine; alternate. Position 133 is an N6-malonyllysine; alternate (K133). N6-acetyllysine is present on K156. N6-acetyllysine; alternate is present on residues K191, K202, K205, K218, and K236. An N6-succinyllysine; alternate mark is found at K191, K202, K205, K218, and K236. Position 249 is an N6-acetyllysine (K249). K250 bears the N6-acetyllysine; alternate mark. An N6-succinyllysine; alternate modification is found at K250. Residues K269 and K292 each carry the N6-acetyllysine modification. At K301 the chain carries N6-succinyllysine. An N6-acetyllysine modification is found at K314. K352 carries the N6-acetyllysine; alternate modification. K352 is modified (N6-succinyllysine; alternate). An N6-acetyllysine mark is found at K359 and K389. At K396 the chain carries N6-acetyllysine; alternate. K396 is modified (N6-succinyllysine; alternate). S410 carries the phosphoserine modification. G440 is an ATP binding site. The residue at position 455 (K455) is an N6-acetyllysine; alternate. At K455 the chain carries N6-succinyllysine; alternate. Position 469 is an N6-acetyllysine (K469). K481 is subject to N6-acetyllysine; alternate. K481 is modified (N6-succinyllysine; alternate). Position 488 is a phosphoserine (S488). Residue D520 coordinates ATP. Residue K551 forms a Glycyl lysine isopeptide (Lys-Gly) (interchain with G-Cter in SUMO2) linkage.

Belongs to the chaperonin (HSP60) family. Homoheptamer arranged in a ring structure. The functional units of these chaperonins consist of heptameric rings of the large subunit Hsp60, which function as a back-to-back double ring. Interacts with 2 heptameric Hsp10 rings to form the symmetrical football complex. Interacts with HRAS. Interacts with ATAD3A. Interacts with ETFBKMT and EEF1AKMT3. Interacts with MFHAS1.

Its subcellular location is the mitochondrion matrix. It carries out the reaction ATP + H2O + a folded polypeptide = ADP + phosphate + an unfolded polypeptide.. In terms of biological role, chaperonin implicated in mitochondrial protein import and macromolecular assembly. Together with Hsp10, facilitates the correct folding of imported proteins. May also prevent misfolding and promote the refolding and proper assembly of unfolded polypeptides generated under stress conditions in the mitochondrial matrix. The functional units of these chaperonins consist of heptameric rings of the large subunit Hsp60, which function as a back-to-back double ring. In a cyclic reaction, Hsp60 ring complexes bind one unfolded substrate protein per ring, followed by the binding of ATP and association with 2 heptameric rings of the co-chaperonin Hsp10. This leads to sequestration of the substrate protein in the inner cavity of Hsp60 where, for a certain period of time, it can fold undisturbed by other cell components. Synchronous hydrolysis of ATP in all Hsp60 subunits results in the dissociation of the chaperonin rings and the release of ADP and the folded substrate protein. In Cricetulus griseus (Chinese hamster), this protein is 60 kDa heat shock protein, mitochondrial (HSPD1).